Consider the following 96-residue polypeptide: Co-chaperonin GroES (96 aa).

Belongs to the GroES chaperonin family. As to quaternary structure, heptamer of 7 subunits arranged in a ring. Interacts with the chaperonin GroEL.

It localises to the cytoplasm. In terms of biological role, together with the chaperonin GroEL, plays an essential role in assisting protein folding. The GroEL-GroES system forms a nano-cage that allows encapsulation of the non-native substrate proteins and provides a physical environment optimized to promote and accelerate protein folding. GroES binds to the apical surface of the GroEL ring, thereby capping the opening of the GroEL channel. The protein is Co-chaperonin GroES of Neisseria gonorrhoeae (strain ATCC 700825 / FA 1090).